The primary structure comprises 667 residues: Glycine--tRNA ligase beta subunit (667 aa).

Belongs to the class-II aminoacyl-tRNA synthetase family. Tetramer of two alpha and two beta subunits.

The protein localises to the cytoplasm. It catalyses the reaction tRNA(Gly) + glycine + ATP = glycyl-tRNA(Gly) + AMP + diphosphate. The chain is Glycine--tRNA ligase beta subunit from Rickettsia canadensis (strain McKiel).